Consider the following 270-residue polypeptide: 3-methyl-2-oxobutanoate hydroxymethyltransferase (270 aa).

D50 and D89 together coordinate Mg(2+). 3-methyl-2-oxobutanoate is bound by residues 50–51 (DS), D89, and K118. E120 contacts Mg(2+). E187 functions as the Proton acceptor in the catalytic mechanism.

The protein belongs to the PanB family. As to quaternary structure, homodecamer; pentamer of dimers. Requires Mg(2+) as cofactor.

Its subcellular location is the cytoplasm. The catalysed reaction is 3-methyl-2-oxobutanoate + (6R)-5,10-methylene-5,6,7,8-tetrahydrofolate + H2O = 2-dehydropantoate + (6S)-5,6,7,8-tetrahydrofolate. The protein operates within cofactor biosynthesis; (R)-pantothenate biosynthesis; (R)-pantoate from 3-methyl-2-oxobutanoate: step 1/2. Functionally, catalyzes the reversible reaction in which hydroxymethyl group from 5,10-methylenetetrahydrofolate is transferred onto alpha-ketoisovalerate to form ketopantoate. This chain is 3-methyl-2-oxobutanoate hydroxymethyltransferase, found in Helicobacter pylori (strain HPAG1).